The chain runs to 298 residues: Tyrosine recombinase XerC (298 aa).

A Core-binding (CB) domain is found at Thr2 to Val88. Residues His109 to Asp288 form the Tyr recombinase domain. Residues Arg148, Lys172, His240, Arg243, and His266 contribute to the active site. Residue Tyr275 is the O-(3'-phospho-DNA)-tyrosine intermediate of the active site.

It belongs to the 'phage' integrase family. XerC subfamily. As to quaternary structure, forms a cyclic heterotetrameric complex composed of two molecules of XerC and two molecules of XerD, in which XerC interacts with XerD via its C-terminal region, XerD interacts with XerC via its C-terminal region and so on.

Its subcellular location is the cytoplasm. With respect to regulation, ftsK may regulate the catalytic switch between XerC and XerD in the heterotetrameric complex during the two steps of the recombination process. Functionally, site-specific tyrosine recombinase, which acts by catalyzing the cutting and rejoining of the recombining DNA molecules. Binds cooperatively to specific DNA consensus sequences that are separated from XerD binding sites by a short central region, forming the heterotetrameric XerC-XerD complex that recombines DNA substrates. The complex is essential to convert dimers of the bacterial chromosome into monomers to permit their segregation at cell division. It also contributes to the segregational stability of plasmids. In the complex XerC specifically exchanges the top DNA strands. This chain is Tyrosine recombinase XerC, found in Escherichia coli O127:H6 (strain E2348/69 / EPEC).